A 454-amino-acid chain; its full sequence is Bifunctional protein GlmU (454 aa).

Residues methionine 1 to arginine 226 are pyrophosphorylase. UDP-N-acetyl-alpha-D-glucosamine is bound by residues leucine 8–glycine 11, lysine 22, glutamine 73, glycine 78–threonine 79, tyrosine 100–aspartate 102, glycine 137, glutamate 151, asparagine 166, and asparagine 224. Aspartate 102 provides a ligand contact to Mg(2+). Asparagine 224 is a Mg(2+) binding site. The tract at residues valine 227–alanine 247 is linker. Residues glycine 248–lysine 454 are N-acetyltransferase. UDP-N-acetyl-alpha-D-glucosamine is bound by residues arginine 330 and lysine 348. The active-site Proton acceptor is histidine 360. Residues tyrosine 363 and asparagine 374 each contribute to the UDP-N-acetyl-alpha-D-glucosamine site. Residues alanine 377, asparagine 383–tyrosine 384, serine 402, alanine 420, and arginine 437 contribute to the acetyl-CoA site.

In the N-terminal section; belongs to the N-acetylglucosamine-1-phosphate uridyltransferase family. It in the C-terminal section; belongs to the transferase hexapeptide repeat family. Homotrimer. Mg(2+) serves as cofactor.

It is found in the cytoplasm. The enzyme catalyses alpha-D-glucosamine 1-phosphate + acetyl-CoA = N-acetyl-alpha-D-glucosamine 1-phosphate + CoA + H(+). It carries out the reaction N-acetyl-alpha-D-glucosamine 1-phosphate + UTP + H(+) = UDP-N-acetyl-alpha-D-glucosamine + diphosphate. Its pathway is nucleotide-sugar biosynthesis; UDP-N-acetyl-alpha-D-glucosamine biosynthesis; N-acetyl-alpha-D-glucosamine 1-phosphate from alpha-D-glucosamine 6-phosphate (route II): step 2/2. It functions in the pathway nucleotide-sugar biosynthesis; UDP-N-acetyl-alpha-D-glucosamine biosynthesis; UDP-N-acetyl-alpha-D-glucosamine from N-acetyl-alpha-D-glucosamine 1-phosphate: step 1/1. The protein operates within bacterial outer membrane biogenesis; LPS lipid A biosynthesis. Functionally, catalyzes the last two sequential reactions in the de novo biosynthetic pathway for UDP-N-acetylglucosamine (UDP-GlcNAc). The C-terminal domain catalyzes the transfer of acetyl group from acetyl coenzyme A to glucosamine-1-phosphate (GlcN-1-P) to produce N-acetylglucosamine-1-phosphate (GlcNAc-1-P), which is converted into UDP-GlcNAc by the transfer of uridine 5-monophosphate (from uridine 5-triphosphate), a reaction catalyzed by the N-terminal domain. The chain is Bifunctional protein GlmU from Shewanella sp. (strain ANA-3).